A 227-amino-acid polypeptide reads, in one-letter code: Lipoprotein-releasing system ATP-binding protein LolD (227 aa).

One can recognise an ABC transporter domain in the interval 6–227 (LKIEGLRKTY…HLEDGVLVER (222 aa)). 43–50 (APSGAGKS) contributes to the ATP binding site.

It belongs to the ABC transporter superfamily. Lipoprotein translocase (TC 3.A.1.125) family. In terms of assembly, the complex is composed of two ATP-binding proteins (LolD) and two transmembrane proteins (LolC and LolE).

The protein localises to the cell inner membrane. Its function is as follows. Part of the ABC transporter complex LolCDE involved in the translocation of mature outer membrane-directed lipoproteins, from the inner membrane to the periplasmic chaperone, LolA. Responsible for the formation of the LolA-lipoprotein complex in an ATP-dependent manner. The chain is Lipoprotein-releasing system ATP-binding protein LolD from Ruegeria sp. (strain TM1040) (Silicibacter sp.).